Consider the following 522-residue polypeptide: Peptide chain release factor 3 (522 aa).

Positions 9-276 (KKRRTFAIIS…SFVNLAPAPQ (268 aa)) constitute a tr-type G domain. Residues 18–25 (SHPDAGKT), 86–90 (DTPGH), and 140–143 (NKLD) contribute to the GTP site.

This sequence belongs to the TRAFAC class translation factor GTPase superfamily. Classic translation factor GTPase family. PrfC subfamily.

It localises to the cytoplasm. Increases the formation of ribosomal termination complexes and stimulates activities of RF-1 and RF-2. It binds guanine nucleotides and has strong preference for UGA stop codons. It may interact directly with the ribosome. The stimulation of RF-1 and RF-2 is significantly reduced by GTP and GDP, but not by GMP. The chain is Peptide chain release factor 3 from Lactobacillus gasseri (strain ATCC 33323 / DSM 20243 / BCRC 14619 / CIP 102991 / JCM 1131 / KCTC 3163 / NCIMB 11718 / NCTC 13722 / AM63).